A 756-amino-acid polypeptide reads, in one-letter code: Cholesterol uptake protein 1 (756 aa).

A signal peptide spans 1 to 18; sequence MRTSQAIFILIFLDSVRN. Residues 19 to 268 are Extracellular-facing; the sequence is QSPQVIPAKW…TIESSMKIFD (250 aa). 2 N-linked (GlcNAc...) asparagine glycosylation sites follow: Asn39 and Asn63. Residues 124–129 carry the Cholesterol-binding sequence motif motif; that stretch reads VHYNFR. Residues Asn140, Asn174, and Asn257 are each glycosylated (N-linked (GlcNAc...) asparagine). The chain crosses the membrane as a helical span at residues 269–289; the sequence is YTIPIVFWACILLLVTIVVFV. At 290-373 the chain is on the cytoplasmic side; that stretch reads YHYFDGIWER…YEERELKYDV (84 aa). The chain crosses the membrane as a helical span at residues 374–394; that stretch reads YKIALAIIGIFYNITVLQLII. The Extracellular segment spans residues 395-421; sequence SKAGSLRQSGDLDECTFNFQCARPLWY. Residues 422–442 traverse the membrane as a helical segment; it reads FVAFNNVVSNGGYVYFGTLII. Residues 443–473 are Cytoplasmic-facing; that stretch reads VMNYCRERSFRRLFAVQPTLAERYGLPQHSG. A helical transmembrane segment spans residues 474-494; that stretch reads LMTAIGLAVIMEGISSATYHV. Residues 495–498 are Extracellular-facing; it reads CPNN. A helical membrane pass occupies residues 499 to 517; that stretch reads INYQFDTALMYVIGMLGKL. Topologically, residues 518-530 are cytoplasmic; that stretch reads KIWSLRHPDMVVS. A helical transmembrane segment spans residues 531–551; that stretch reads AYHAFGFLGVFLMAAIAGVYV. At 552–554 the chain is on the extracellular side; that stretch reads HNM. A helical transmembrane segment spans residues 555 to 575; sequence IFWALFSIIYIASMLLVSLEF. Positions 570–578 match the Cholesterol-binding sequence motif motif; it reads LVSLEFYFK. The Cytoplasmic portion of the chain corresponds to 576–612; it reads YFKGIWTLNLRELRNSIRLSWVSSRHLSCVVPAYKAR. The helical transmembrane segment at 613 to 633 threads the bilayer; sequence FFVILLLNIANTAVVVYGLEA. Over 634-637 the chain is Extracellular; that stretch reads HPKD. The chain crosses the membrane as a helical span at residues 638 to 658; it reads FLSFLLIPFIGNLFIYIIYYI. Over 659-671 the chain is Cytoplasmic; the sequence is LMKMIYREKIPKR. The chain crosses the membrane as a helical span at residues 672 to 692; the sequence is AIALLFAAVISWTCAGILFNQ. Residues 693 to 728 lie on the Extracellular side of the membrane; it reads RVSDWSKMPAISRELNKPCIFLNFYDNHDLWHLSSA. Residues 729-749 traverse the membrane as a helical segment; the sequence is FAIFFSFTAINVIDDDLMFVM. The Cytoplasmic segment spans residues 750–756; it reads RNTIRVF.

Belongs to the SID1 family. In terms of tissue distribution, highly expressed along the intestine with expression also detected in the pharynx, especially at the terminal bulb, and in the excretory gland cells.

The protein localises to the cell membrane. The enzyme catalyses cholesterol(in) = cholesterol(out). Functionally, cholesterol-binding protein which is involved in dietary cholesterol uptake from the environment. Does not play a role in double-stranded RNA transport in contrast to other SID1 family members. This is Cholesterol uptake protein 1 from Caenorhabditis elegans.